A 488-amino-acid polypeptide reads, in one-letter code: Cobyric acid synthase (488 aa).

In terms of domain architecture, GATase cobBQ-type spans 252–440 (VPLIAVLRFP…VHGLFANDRQ (189 aa)). Residue C334 is the Nucleophile of the active site. The active site involves H432.

It belongs to the CobB/CobQ family. CobQ subfamily.

Its pathway is cofactor biosynthesis; adenosylcobalamin biosynthesis. In terms of biological role, catalyzes amidations at positions B, D, E, and G on adenosylcobyrinic A,C-diamide. NH(2) groups are provided by glutamine, and one molecule of ATP is hydrogenolyzed for each amidation. The chain is Cobyric acid synthase from Methylorubrum populi (strain ATCC BAA-705 / NCIMB 13946 / BJ001) (Methylobacterium populi).